We begin with the raw amino-acid sequence, 336 residues long: Glyceraldehyde-3-phosphate dehydrogenase (336 aa).

Residues 12–13, Asp-34, Arg-78, and Thr-121 contribute to the NAD(+) site; that span reads RI. Residues 151–153, Thr-182, Arg-199, 212–213, and Arg-235 contribute to the D-glyceraldehyde 3-phosphate site; these read SCT and TG. The active-site Nucleophile is the Cys-152. Asn-316 contributes to the NAD(+) binding site.

It belongs to the glyceraldehyde-3-phosphate dehydrogenase family. In terms of assembly, homotetramer.

Its subcellular location is the cytoplasm. The enzyme catalyses D-glyceraldehyde 3-phosphate + phosphate + NAD(+) = (2R)-3-phospho-glyceroyl phosphate + NADH + H(+). It participates in carbohydrate degradation; glycolysis; pyruvate from D-glyceraldehyde 3-phosphate: step 1/5. In terms of biological role, catalyzes the oxidative phosphorylation of glyceraldehyde 3-phosphate (G3P) to 1,3-bisphosphoglycerate (BPG) using the cofactor NAD. The first reaction step involves the formation of a hemiacetal intermediate between G3P and a cysteine residue, and this hemiacetal intermediate is then oxidized to a thioester, with concomitant reduction of NAD to NADH. The reduced NADH is then exchanged with the second NAD, and the thioester is attacked by a nucleophilic inorganic phosphate to produce BPG. This chain is Glyceraldehyde-3-phosphate dehydrogenase (gap), found in Streptococcus dysgalactiae subsp. equisimilis (Streptococcus equisimilis).